The sequence spans 632 residues: MSDESHPHERHMTPRKLFYLALGSVGVVYGDIGTSPLYAFREALKPVAHDGVTRFEVISLISLMIWALTIIVTIKYVLFLLRADNDGEGGTLSLLALLMKTANGHTALLMLLGLMGAALFLGDAMITPALSVLSAVEGLKLVTPSLAEYIVPISVVILALLFVVQSRGTGAVAKFFGPITAVWFLVMAAAGISHISDDFGILAAFNPYYAVSFLLHEGFYGVVVLGAVFLTVTGAEALYADLGHFGRRPIQWAWFLLVFPALTLNYLGQGALVLGKPETMSDPFYLMYPQWALLPVVILATAATIIASQAVITGAFSLVRQGINLGFLPRMEILFTSETNTGQIFLPSVNAVLFFGVIFLVLSFKTSDALATAYGISVTGAMVVTSIMAFEFVRARWNWSLPVAVIALAPLVVLEMIFLGANLLKIHDGGYIPILIATAFTVVMWTWRRGTAILMEKTRHTDIPLASFVSSIERKSEHSPAQVPGTAIFLTSDPESAPAALLHNLKHNHVLHDRNVILTIRTVNKPRVPSHDRYKVEPISERFSRVELLFGFMESQNVSQALATLRKTGLKFDIMSTSFYLGRRKLVPDAKSGMPYWQDRLYIALANAAANPSDYFRLPANRVVELGSHVII.

Helical transmembrane passes span L17–L37, L60–L80, T106–I126, P144–V164, F175–I195, A210–L230, W254–L274, A292–I312, I344–F364, L370–F390, L401–A421, and I426–T446.

Belongs to the HAK/KUP transporter (TC 2.A.72) family.

The protein resides in the cell inner membrane. It carries out the reaction K(+)(in) + H(+)(in) = K(+)(out) + H(+)(out). Its function is as follows. Transport of potassium into the cell. Likely operates as a K(+):H(+) symporter. The sequence is that of Probable potassium transport system protein Kup 1 from Rhizobium etli (strain ATCC 51251 / DSM 11541 / JCM 21823 / NBRC 15573 / CFN 42).